Reading from the N-terminus, the 108-residue chain is Nucleoid-associated protein Lcho_1975 (108 aa).

This sequence belongs to the YbaB/EbfC family. In terms of assembly, homodimer.

The protein localises to the cytoplasm. The protein resides in the nucleoid. Binds to DNA and alters its conformation. May be involved in regulation of gene expression, nucleoid organization and DNA protection. The sequence is that of Nucleoid-associated protein Lcho_1975 from Leptothrix cholodnii (strain ATCC 51168 / LMG 8142 / SP-6) (Leptothrix discophora (strain SP-6)).